A 316-amino-acid polypeptide reads, in one-letter code: Pantothenate kinase (316 aa).

95 to 102 (GSVSVGKS) lines the ATP pocket.

It belongs to the prokaryotic pantothenate kinase family.

The protein resides in the cytoplasm. The catalysed reaction is (R)-pantothenate + ATP = (R)-4'-phosphopantothenate + ADP + H(+). The protein operates within cofactor biosynthesis; coenzyme A biosynthesis; CoA from (R)-pantothenate: step 1/5. In Actinobacillus pleuropneumoniae serotype 7 (strain AP76), this protein is Pantothenate kinase.